We begin with the raw amino-acid sequence, 510 residues long: NAD(P)H-quinone oxidoreductase subunit 2 B, chloroplastic (510 aa).

13 consecutive transmembrane segments (helical) span residues 24–44 (LLLF…GLIL), 57–77 (IPWL…ALLF), 99–119 (IFQF…VEYI), 124–144 (MAIT…MFLC), 150–170 (ITIF…SGYT), 183–203 (YLLM…WLYG), 227–247 (PGIS…LSPA), 295–315 (WHLL…LIAI), 323–343 (MLAY…IVGD), 347–367 (GYAS…GTFA), 395–415 (ALSS…AGFF), 418–438 (LHLF…IGLL), and 484–504 (MIVC…IIAI).

This sequence belongs to the complex I subunit 2 family. NDH is composed of at least 16 different subunits, 5 of which are encoded in the nucleus.

The protein resides in the plastid. It localises to the chloroplast thylakoid membrane. The enzyme catalyses a plastoquinone + NADH + (n+1) H(+)(in) = a plastoquinol + NAD(+) + n H(+)(out). It carries out the reaction a plastoquinone + NADPH + (n+1) H(+)(in) = a plastoquinol + NADP(+) + n H(+)(out). NDH shuttles electrons from NAD(P)H:plastoquinone, via FMN and iron-sulfur (Fe-S) centers, to quinones in the photosynthetic chain and possibly in a chloroplast respiratory chain. The immediate electron acceptor for the enzyme in this species is believed to be plastoquinone. Couples the redox reaction to proton translocation, and thus conserves the redox energy in a proton gradient. The chain is NAD(P)H-quinone oxidoreductase subunit 2 B, chloroplastic from Chloranthus spicatus (Chulantree).